We begin with the raw amino-acid sequence, 732 residues long: 1,4-alpha-glucan branching enzyme GlgB 1 (732 aa).

Asp-411 acts as the Nucleophile in catalysis. Glu-464 (proton donor) is an active-site residue.

This sequence belongs to the glycosyl hydrolase 13 family. GlgB subfamily. Monomer.

It carries out the reaction Transfers a segment of a (1-&gt;4)-alpha-D-glucan chain to a primary hydroxy group in a similar glucan chain.. Its pathway is glycan biosynthesis; glycogen biosynthesis. Catalyzes the formation of the alpha-1,6-glucosidic linkages in glycogen by scission of a 1,4-alpha-linked oligosaccharide from growing alpha-1,4-glucan chains and the subsequent attachment of the oligosaccharide to the alpha-1,6 position. This Xanthomonas euvesicatoria pv. vesicatoria (strain 85-10) (Xanthomonas campestris pv. vesicatoria) protein is 1,4-alpha-glucan branching enzyme GlgB 1.